A 361-amino-acid polypeptide reads, in one-letter code: Biotin synthase (361 aa).

A Radical SAM core domain is found at 83–308 (PEVEVEGIIS…RTILRYAGGR (226 aa)). Residues C98, C102, and C105 each coordinate [4Fe-4S] cluster. [2Fe-2S] cluster contacts are provided by C141, C174, C233, and R303.

This sequence belongs to the radical SAM superfamily. Biotin synthase family. As to quaternary structure, homodimer. [4Fe-4S] cluster serves as cofactor. [2Fe-2S] cluster is required as a cofactor.

The enzyme catalyses (4R,5S)-dethiobiotin + (sulfur carrier)-SH + 2 reduced [2Fe-2S]-[ferredoxin] + 2 S-adenosyl-L-methionine = (sulfur carrier)-H + biotin + 2 5'-deoxyadenosine + 2 L-methionine + 2 oxidized [2Fe-2S]-[ferredoxin]. It functions in the pathway cofactor biosynthesis; biotin biosynthesis; biotin from 7,8-diaminononanoate: step 2/2. Functionally, catalyzes the conversion of dethiobiotin (DTB) to biotin by the insertion of a sulfur atom into dethiobiotin via a radical-based mechanism. The polypeptide is Biotin synthase (Parafrankia sp. (strain EAN1pec)).